The sequence spans 492 residues: N-succinylglutamate 5-semialdehyde dehydrogenase (492 aa).

220–225 serves as a coordination point for NAD(+); that stretch reads GSASTG. Active-site residues include glutamate 243 and cysteine 277.

Belongs to the aldehyde dehydrogenase family. AstD subfamily.

The catalysed reaction is N-succinyl-L-glutamate 5-semialdehyde + NAD(+) + H2O = N-succinyl-L-glutamate + NADH + 2 H(+). It participates in amino-acid degradation; L-arginine degradation via AST pathway; L-glutamate and succinate from L-arginine: step 4/5. Its function is as follows. Catalyzes the NAD-dependent reduction of succinylglutamate semialdehyde into succinylglutamate. This chain is N-succinylglutamate 5-semialdehyde dehydrogenase, found in Salmonella typhimurium (strain LT2 / SGSC1412 / ATCC 700720).